The following is a 193-amino-acid chain: dCTP deaminase (193 aa).

DCTP-binding positions include 110 to 115, Asp-128, 136 to 138, Tyr-171, Lys-178, and Gln-182; these read RSSLAR and VLE. The active-site Proton donor/acceptor is Glu-138. The disordered stretch occupies residues 169–193; the sequence is RPYNRRQDAKYRDQQGAVASRIDKD.

This sequence belongs to the dCTP deaminase family. In terms of assembly, homotrimer.

The enzyme catalyses dCTP + H2O + H(+) = dUTP + NH4(+). Its pathway is pyrimidine metabolism; dUMP biosynthesis; dUMP from dCTP (dUTP route): step 1/2. Its function is as follows. Catalyzes the deamination of dCTP to dUTP. This chain is dCTP deaminase, found in Salmonella arizonae (strain ATCC BAA-731 / CDC346-86 / RSK2980).